Reading from the N-terminus, the 280-residue chain is Fructose-1,6-bisphosphatase/inositol-1-monophosphatase (280 aa).

Mg(2+) is bound by residues glutamate 73, aspartate 94, leucine 96, and aspartate 97. Substrate is bound by residues aspartate 97–threonine 99, arginine 195, valine 200, and arginine 219. Residue aspartate 226 participates in Mg(2+) binding.

This sequence belongs to the inositol monophosphatase superfamily. FBPase class 4 family. Mg(2+) serves as cofactor.

The enzyme catalyses beta-D-fructose 1,6-bisphosphate + H2O = beta-D-fructose 6-phosphate + phosphate. It carries out the reaction a myo-inositol phosphate + H2O = myo-inositol + phosphate. Its function is as follows. Phosphatase with broad specificity; it can dephosphorylate fructose 1,6-bisphosphate, and both D and L isomers of inositol-1-phosphate (I-1-P). The sequence is that of Fructose-1,6-bisphosphatase/inositol-1-monophosphatase (suhB) from Methanothermobacter thermautotrophicus (strain ATCC 29096 / DSM 1053 / JCM 10044 / NBRC 100330 / Delta H) (Methanobacterium thermoautotrophicum).